Here is a 252-residue protein sequence, read N- to C-terminus: Large ribosomal subunit protein uL3 (252 aa).

Q169 carries the post-translational modification N5-methylglutamine.

It belongs to the universal ribosomal protein uL3 family. In terms of assembly, part of the 50S ribosomal subunit. Forms a cluster with proteins L14 and L19. Methylated by PrmB.

In terms of biological role, one of the primary rRNA binding proteins, it binds directly near the 3'-end of the 23S rRNA, where it nucleates assembly of the 50S subunit. In Hyphomonas neptunium (strain ATCC 15444), this protein is Large ribosomal subunit protein uL3.